A 126-amino-acid polypeptide reads, in one-letter code: Large ribosomal subunit protein eL18 (126 aa).

The protein belongs to the eukaryotic ribosomal protein eL18 family.

The sequence is that of Large ribosomal subunit protein eL18 from Methanosarcina mazei (strain ATCC BAA-159 / DSM 3647 / Goe1 / Go1 / JCM 11833 / OCM 88) (Methanosarcina frisia).